A 178-amino-acid polypeptide reads, in one-letter code: GPI mannosyltransferase 2 subunit C167.09 (178 aa).

A signal peptide spans 1 to 20 (MREFRLIFVLLFFLPSFAIA). The Lumenal portion of the chain corresponds to 21–152 (NTEIINVETG…LGFLPKSVLP (132 aa)). N-linked (GlcNAc...) asparagine glycosylation is found at Asn-48, Asn-49, Asn-106, Asn-115, and Asn-122. A helical membrane pass occupies residues 153-173 (IVGFVFVIILIALICMTNLFI). At 174 to 178 (KHKRD) the chain is on the cytoplasmic side.

In terms of assembly, part of the GPI mannosyltransferase 2 complex composed of gpi18 and C167.09.

The protein localises to the endoplasmic reticulum membrane. Its pathway is glycolipid biosynthesis; glycosylphosphatidylinositol-anchor biosynthesis. In terms of biological role, essential component of the GPI mannosyltransferase 2 complex. Responsible for the transfer of the second mannose to the glycosylphosphatidylinositol during GPI precursor assembly. In Schizosaccharomyces pombe (strain 972 / ATCC 24843) (Fission yeast), this protein is GPI mannosyltransferase 2 subunit C167.09.